Here is a 319-residue protein sequence, read N- to C-terminus: Formimidoylglutamase (319 aa).

Histidine 131, aspartate 154, histidine 156, aspartate 158, cysteine 248, and aspartate 250 together coordinate Mn(2+).

It belongs to the arginase family. The cofactor is Mn(2+).

It carries out the reaction N-formimidoyl-L-glutamate + H2O = formamide + L-glutamate. Its pathway is amino-acid degradation; L-histidine degradation into L-glutamate; L-glutamate from N-formimidoyl-L-glutamate (hydrolase route): step 1/1. In terms of biological role, catalyzes the conversion of N-formimidoyl-L-glutamate to L-glutamate and formamide. This chain is Formimidoylglutamase, found in Legionella pneumophila subsp. pneumophila (strain Philadelphia 1 / ATCC 33152 / DSM 7513).